The primary structure comprises 342 residues: Uroporphyrinogen decarboxylase (342 aa).

Substrate is bound by residues 24-28 (RQAGR), Asp-74, Tyr-149, Ser-204, and His-319.

Belongs to the uroporphyrinogen decarboxylase family. Homodimer.

Its subcellular location is the cytoplasm. It catalyses the reaction uroporphyrinogen III + 4 H(+) = coproporphyrinogen III + 4 CO2. The protein operates within porphyrin-containing compound metabolism; protoporphyrin-IX biosynthesis; coproporphyrinogen-III from 5-aminolevulinate: step 4/4. In terms of biological role, catalyzes the decarboxylation of four acetate groups of uroporphyrinogen-III to yield coproporphyrinogen-III. The chain is Uroporphyrinogen decarboxylase from Chelativorans sp. (strain BNC1).